Reading from the N-terminus, the 226-residue chain is Ribonuclease 3 (226 aa).

The RNase III domain maps to 6-128 (INRLQRKLGY…LIGGVFLDSN (123 aa)). Glutamate 41 contacts Mg(2+). Aspartate 45 is a catalytic residue. Aspartate 114 and glutamate 117 together coordinate Mg(2+). Glutamate 117 is a catalytic residue. One can recognise a DRBM domain in the interval 155 to 225 (DPKTRLQEYL…AEQVLKKLEL (71 aa)).

It belongs to the ribonuclease III family. Homodimer. The cofactor is Mg(2+).

The protein localises to the cytoplasm. It carries out the reaction Endonucleolytic cleavage to 5'-phosphomonoester.. In terms of biological role, digests double-stranded RNA. Involved in the processing of primary rRNA transcript to yield the immediate precursors to the large and small rRNAs (23S and 16S). Processes some mRNAs, and tRNAs when they are encoded in the rRNA operon. Processes pre-crRNA and tracrRNA of type II CRISPR loci if present in the organism. The sequence is that of Ribonuclease 3 from Salmonella choleraesuis (strain SC-B67).